The following is a 257-amino-acid chain: Phosphate import ATP-binding protein PstB (257 aa).

The 242-residue stretch at 5-246 folds into the ABC transporter domain; that stretch reads LEIKDLTAFY…EVIFTSPKNE (242 aa). 37–44 serves as a coordination point for ATP; the sequence is GPSGCGKS.

The protein belongs to the ABC transporter superfamily. Phosphate importer (TC 3.A.1.7) family. The complex is composed of two ATP-binding proteins (PstB), two transmembrane proteins (PstC and PstA) and a solute-binding protein (PstS).

The protein resides in the cell membrane. It catalyses the reaction phosphate(out) + ATP + H2O = ADP + 2 phosphate(in) + H(+). Functionally, part of the ABC transporter complex PstSACB involved in phosphate import. Responsible for energy coupling to the transport system. The polypeptide is Phosphate import ATP-binding protein PstB (Tropheryma whipplei (strain Twist) (Whipple's bacillus)).